Consider the following 308-residue polypeptide: Ribonuclease Z (308 aa).

Positions 63, 65, 67, 68, 141, 212, and 270 each coordinate Zn(2+). The active-site Proton acceptor is the Asp67.

It belongs to the RNase Z family. As to quaternary structure, homodimer. The cofactor is Zn(2+).

It catalyses the reaction Endonucleolytic cleavage of RNA, removing extra 3' nucleotides from tRNA precursor, generating 3' termini of tRNAs. A 3'-hydroxy group is left at the tRNA terminus and a 5'-phosphoryl group is left at the trailer molecule.. Functionally, zinc phosphodiesterase, which displays some tRNA 3'-processing endonuclease activity. Probably involved in tRNA maturation, by removing a 3'-trailer from precursor tRNA. The polypeptide is Ribonuclease Z (Pediococcus pentosaceus (strain ATCC 25745 / CCUG 21536 / LMG 10740 / 183-1w)).